The chain runs to 258 residues: Regulatory protein RecX (258 aa).

This sequence belongs to the RecX family.

The protein localises to the cytoplasm. In terms of biological role, modulates RecA activity. In Streptococcus equi subsp. equi (strain 4047), this protein is Regulatory protein RecX.